Consider the following 160-residue polypeptide: SsrA-binding protein (160 aa).

The disordered stretch occupies residues 134 to 160 (YDKRDTERERDSNRELHRAVRNKGKED).

Belongs to the SmpB family.

It localises to the cytoplasm. Required for rescue of stalled ribosomes mediated by trans-translation. Binds to transfer-messenger RNA (tmRNA), required for stable association of tmRNA with ribosomes. tmRNA and SmpB together mimic tRNA shape, replacing the anticodon stem-loop with SmpB. tmRNA is encoded by the ssrA gene; the 2 termini fold to resemble tRNA(Ala) and it encodes a 'tag peptide', a short internal open reading frame. During trans-translation Ala-aminoacylated tmRNA acts like a tRNA, entering the A-site of stalled ribosomes, displacing the stalled mRNA. The ribosome then switches to translate the ORF on the tmRNA; the nascent peptide is terminated with the 'tag peptide' encoded by the tmRNA and targeted for degradation. The ribosome is freed to recommence translation, which seems to be the essential function of trans-translation. The chain is SsrA-binding protein from Pseudomonas fluorescens (strain SBW25).